We begin with the raw amino-acid sequence, 449 residues long: N-succinylarginine dihydrolase (449 aa).

Substrate-binding positions include 19–28, Asn-110, and 137–138; these read GGLSYGNVAS and HR. The interval 23–43 is disordered; it reads YGNVASQSNSQQGSNPREAAR. Positions 25-37 are enriched in polar residues; sequence NVASQSNSQQGSN. Glu-174 is a catalytic residue. Arg-214 serves as a coordination point for substrate. His-250 is a catalytic residue. Asp-252 and Asn-365 together coordinate substrate. Cys-371 serves as the catalytic Nucleophile.

It belongs to the succinylarginine dihydrolase family. As to quaternary structure, homodimer.

The enzyme catalyses N(2)-succinyl-L-arginine + 2 H2O + 2 H(+) = N(2)-succinyl-L-ornithine + 2 NH4(+) + CO2. The protein operates within amino-acid degradation; L-arginine degradation via AST pathway; L-glutamate and succinate from L-arginine: step 2/5. In terms of biological role, catalyzes the hydrolysis of N(2)-succinylarginine into N(2)-succinylornithine, ammonia and CO(2). The sequence is that of N-succinylarginine dihydrolase from Pseudomonas putida (strain GB-1).